Reading from the N-terminus, the 476-residue chain is Calcium/calmodulin-dependent protein kinase type 1G (476 aa).

Positions 23–277 (FIFMEVLGSG…CEKALSHPWI (255 aa)) constitute a Protein kinase domain. Residues 29–37 (LGSGAFSEV) and Lys-52 contribute to the ATP site. Residue Asp-143 is the Proton acceptor of the active site. Residues 277-317 (IDGNTALHRDIYPSVSLQIQKNFAKSKWRQAFNAAAVVHHM) are autoinhibitory domain. Residues 297–318 (KNFAKSKWRQAFNAAAVVHHMR) form a calmodulin-binding region. Residues 325–352 (HSPGVRPEVENRPPETQASETSRPSSPE) are disordered. The segment covering 338 to 352 (PETQASETSRPSSPE) has biased composition (polar residues).

Belongs to the protein kinase superfamily. CAMK Ser/Thr protein kinase family. CaMK subfamily. In terms of processing, may be prenylated on Cys-473. In terms of tissue distribution, mainly expressed in brain with small amounts in skeletal muscles, kidney, spleen and liver. Strongly expressed in forebrain neocortex, striatum and limbic system.

The protein resides in the cytoplasm. Its subcellular location is the golgi apparatus membrane. It is found in the cell membrane. The enzyme catalyses L-seryl-[protein] + ATP = O-phospho-L-seryl-[protein] + ADP + H(+). The catalysed reaction is L-threonyl-[protein] + ATP = O-phospho-L-threonyl-[protein] + ADP + H(+). Its activity is regulated as follows. Activated by Ca(2+)/calmodulin. Binding of calmodulin is thought to result in a conformational change and leads to activation through phosphorylation by CAMKK1. Its function is as follows. Calcium/calmodulin-dependent protein kinase belonging to a proposed calcium-triggered signaling cascade. In vitro phosphorylates transcription factor CREB1. This chain is Calcium/calmodulin-dependent protein kinase type 1G (CAMK1G), found in Homo sapiens (Human).